The following is a 265-amino-acid chain: 5'-nucleotidase SurE (265 aa).

The a divalent metal cation site is built by Asp-8, Asp-9, Ser-39, and Asn-96.

This sequence belongs to the SurE nucleotidase family. A divalent metal cation serves as cofactor.

Its subcellular location is the cytoplasm. The enzyme catalyses a ribonucleoside 5'-phosphate + H2O = a ribonucleoside + phosphate. In terms of biological role, nucleotidase that shows phosphatase activity on nucleoside 5'-monophosphates. The polypeptide is 5'-nucleotidase SurE (Rubrobacter xylanophilus (strain DSM 9941 / JCM 11954 / NBRC 16129 / PRD-1)).